The following is a 562-amino-acid chain: Vacuolar basic amino acid transporter 1 (562 aa).

The Vacuolar portion of the chain corresponds to 1–30; it reads MQTLDETSNLLPPPEEAEAPPLEQKFHEYN. The helical transmembrane segment at 31-51 threads the bilayer; sequence LALPKFPILFSLWLGSFLSSL. The Cytoplasmic segment spans residues 52–100; it reads DSTIVANIMNRVAEEFSESSKKQWIATSFLLTNTAFQPLYGKLSDITGR. A helical membrane pass occupies residues 101–121; it reads KSALLTAQFFFGLGCLLTCFA. The Vacuolar portion of the chain corresponds to 122 to 131; the sequence is RNVTEFSIAR. N123 carries N-linked (GlcNAc...) asparagine glycosylation. A helical membrane pass occupies residues 132 to 152; it reads AICGIGAGGLNAISSIAVSDI. The Cytoplasmic portion of the chain corresponds to 153–166; the sequence is CTARERGVYQGYAN. The helical transmembrane segment at 167 to 187 threads the bilayer; sequence IVFGFGQLLGAPLGGVFIETI. Residues 188 to 190 lie on the Vacuolar side of the membrane; it reads GWR. A helical membrane pass occupies residues 191–211; that stretch reads ALFGIQVPVIMLCSVLAIKNI. The Cytoplasmic portion of the chain corresponds to 212–232; it reads NIKLFHVPPMKERYTLKNLSR. A helical membrane pass occupies residues 233 to 253; sequence IDIFGSLSLVATISGVLFLCS. Over 254-255 the chain is Vacuolar; that stretch reads SQ. A helical transmembrane segment spans residues 256-276; sequence LNKLYLALFTIGSFIVFILVE. The Cytoplasmic portion of the chain corresponds to 277 to 292; the sequence is RYYATEKILPFELLTR. Residues 293–313 form a helical membrane-spanning segment; the sequence is SFCLSSAVTVISSFVVFGEIF. The Vacuolar portion of the chain corresponds to 314-331; the sequence is RSPIYLQLLQNISVTKTG. N-linked (GlcNAc...) asparagine glycosylation is present at N324. Residues 332–352 traverse the membrane as a helical segment; sequence LFLIFPSISVAVGSLVTGWVL. The Cytoplasmic portion of the chain corresponds to 353 to 365; sequence RNTKINLAHCAYQ. A helical membrane pass occupies residues 366 to 386; sequence IIFGGMIMQLLGLGLGYFLLS. Over 387–419 the chain is Vacuolar; the sequence is HLNPDYTIYDMLESITFRSNSIWWKLIYVFASV. Residues 420 to 440 form a helical membrane-spanning segment; sequence LVSFGYACLLVATLVSIVFTV. The Cytoplasmic segment spans residues 441 to 448; it reads EKSQQGTM. Residues 449-469 form a helical membrane-spanning segment; sequence TGVFYLWRSIGNVLGASLTLV. Residues 470-528 are Vacuolar-facing; that stretch reads SYENSLSSMLWNYMFKTKRDDEYHFTKKQYYSLINDSSYLRGPNFPTDIFVRILDVYKK. N504 carries N-linked (GlcNAc...) asparagine glycosylation. A helical transmembrane segment spans residues 529–549; sequence AFLISYIPNIALAAVGIVLSL. At 550–562 the chain is on the cytoplasmic side; it reads YLVKHTYKRSSSS.

Belongs to the major facilitator superfamily.

The protein localises to the vacuole membrane. Functionally, transporter required for vacuolar uptake of at least histidine and lysine. This Saccharomyces cerevisiae (strain ATCC 204508 / S288c) (Baker's yeast) protein is Vacuolar basic amino acid transporter 1 (VBA1).